The primary structure comprises 205 residues: Probable GTP-binding protein EngB (205 aa).

The region spanning 29–203 (QGAEIAFIGR…KAVLSQWFSS (175 aa)) is the EngB-type G domain. Residues 37 to 44 (GRSNAGKS), 64 to 68 (GRTQM), 82 to 85 (DLPG), 149 to 152 (TKSD), and 182 to 184 (FSS) contribute to the GTP site. Mg(2+)-binding residues include Ser-44 and Thr-66.

Belongs to the TRAFAC class TrmE-Era-EngA-EngB-Septin-like GTPase superfamily. EngB GTPase family. Mg(2+) is required as a cofactor.

Necessary for normal cell division and for the maintenance of normal septation. This is Probable GTP-binding protein EngB from Coxiella burnetii (strain CbuK_Q154) (Coxiella burnetii (strain Q154)).